The primary structure comprises 80 residues: Putative membrane protein insertion efficiency factor (80 aa).

The tract at residues 61–80 (KTGKDPVPDHFSLKRNQEGE) is disordered. Positions 62-80 (TGKDPVPDHFSLKRNQEGE) are enriched in basic and acidic residues.

Belongs to the UPF0161 family.

Its subcellular location is the cell membrane. Its function is as follows. Could be involved in insertion of integral membrane proteins into the membrane. The sequence is that of Putative membrane protein insertion efficiency factor from Streptococcus pneumoniae serotype 19F (strain G54).